Here is a 514-residue protein sequence, read N- to C-terminus: Na(+)/H(+) antiporter NhaB (514 aa).

A run of 12 helical transmembrane segments spans residues 23 to 43 (LALLVFLIVNPFIFLANPFIA), 63 to 83 (PLLPGGLLAIEAVIIGMTSAA), 97 to 117 (LLLMFMVAGIYFMKQLLLFIF), 120 to 140 (LLLSIRSKMVLSLAFCVAAAF), 144 to 164 (FLDALTVVAVVISVAVGFYGI), 202 to 222 (LMMHAGVGTALGGVMTMVGEP), 238 to 258 (FFLRMSPVTVPVLVCGLLTCM), 303 to 323 (AVIGVWLVTALALHLAEVGLI), 357 to 377 (LTVFFSIVAVIIDQHLFAPII), 391 to 411 (LFYLFNGLLSSISDNVFVGTI), 447 to 467 (ATPNGQAAFLFLLTSALAPLI), and 475 to 495 (VWMALPYTIVLTLIGLLCVEF).

It belongs to the NhaB Na(+)/H(+) (TC 2.A.34) antiporter family.

It localises to the cell inner membrane. The enzyme catalyses 2 Na(+)(in) + 3 H(+)(out) = 2 Na(+)(out) + 3 H(+)(in). Its function is as follows. Na(+)/H(+) antiporter that extrudes sodium in exchange for external protons. This chain is Na(+)/H(+) antiporter NhaB, found in Salmonella gallinarum (strain 287/91 / NCTC 13346).